The following is a 596-amino-acid chain: Pescadillo homolog (596 aa).

Residues Pro-347–Pro-440 enclose the BRCT domain. A disordered region spans residues Ser-449–Met-552. The stretch at Ala-460 to Asn-596 forms a coiled coil. Acidic residues predominate over residues Leu-463–Ala-500. Residues Glu-501–Glu-510 show a composition bias toward basic and acidic residues. Residues Ser-519 to Lys-529 are compositionally biased toward low complexity.

The protein belongs to the pescadillo family. In terms of assembly, component of the NOP7 complex, composed of ERB1, NOP7 and YTM1. The complex is held together by ERB1, which interacts with NOP7 via its N-terminal domain and with YTM1 via a high-affinity interaction between the seven-bladed beta-propeller domains of the 2 proteins. The NOP7 complex associates with the 66S pre-ribosome.

The protein resides in the nucleus. It localises to the nucleolus. The protein localises to the nucleoplasm. In terms of biological role, component of the NOP7 complex, which is required for maturation of the 25S and 5.8S ribosomal RNAs and formation of the 60S ribosome. This is Pescadillo homolog from Eremothecium gossypii (strain ATCC 10895 / CBS 109.51 / FGSC 9923 / NRRL Y-1056) (Yeast).